A 263-amino-acid chain; its full sequence is Putative hydro-lyase GK2103 (263 aa).

This sequence belongs to the D-glutamate cyclase family.

The polypeptide is Putative hydro-lyase GK2103 (Geobacillus kaustophilus (strain HTA426)).